The primary structure comprises 431 residues: Protoheme IX farnesyltransferase, mitochondrial (431 aa).

A mitochondrion-targeting transit peptide spans 1-33 (MWRRSVVYRFSSRISVSSSLPNPRLIPWSRELC). The next 9 membrane-spanning stretches (helical) occupy residues 109 to 129 (LVVATSGTGYILGTGNAAISF), 131 to 153 (GLCYTCAGTMMIAASANSLNQIF), 174 to 194 (ISVPHAVAWATIAGASGACLL), 200 to 220 (MLAAGLASANLVLYAFVYTPL), 226 to 246 (INTWVGAVVGAIPPLLGWAAA), 255 to 275 (MILPAALYFWQIPHFMALAHL), 298 to 317 (IAAVALRNCFYMIPLGFIAY), 322 to 344 (TSSWFCLESTLLTLAIAATAFSF), and 356 to 376 (MFHASLLFLPVFMSGLLLHRV).

It belongs to the ubiA prenyltransferase (TC 3.D.4.8) family.

Its subcellular location is the mitochondrion inner membrane. The enzyme catalyses heme b + (2E,6E)-farnesyl diphosphate + H2O = Fe(II)-heme o + diphosphate. Its function is as follows. Converts protoheme IX and farnesyl diphosphate to heme O. This Arabidopsis thaliana (Mouse-ear cress) protein is Protoheme IX farnesyltransferase, mitochondrial (COX10).